A 100-amino-acid chain; its full sequence is Esterase PE11 (100 aa).

Residues 4–94 (VTTRPDSIGE…TSYWLTELAN (91 aa)) form the PE domain.

This sequence belongs to the mycobacterial PE family.

The protein localises to the secreted. It localises to the cell wall. The enzyme catalyses an acetyl ester + H2O = an aliphatic alcohol + acetate + H(+). It carries out the reaction a butanoate ester + H2O = an aliphatic alcohol + butanoate + H(+). The catalysed reaction is an octanoate ester + H2O = an aliphatic alcohol + octanoate + H(+). Its function is as follows. Involved in cell wall lipids remodeling and in virulence. Restricts the biofilm growth and is essential for the optimal intracellular survival of M.tuberculosis. Shows esterase activity with a preference for short-chain esters, particularly pNP-acetate (C2) and pNP-butyrate (C4). Has weaker activity with pNP-octanoate (C8), pNP-laurate (C12) and pNP-myristate (C14). Shows weak long-chain triacylglycerol (TAG) hydrolase activity in vitro. Not necessary for PPE17 stability or for its localization on the mycobacterial surface. The chain is Esterase PE11 from Mycobacterium tuberculosis (strain ATCC 25618 / H37Rv).